A 238-amino-acid polypeptide reads, in one-letter code: ATP-dependent dethiobiotin synthetase BioD (238 aa).

12-17 (EVGKTV) contacts ATP. Thr-16 is a binding site for Mg(2+). Lys-37 is an active-site residue. Thr-41 is a binding site for substrate. Residues Asp-50, 109–112 (EGAG), 170–171 (GS), and 200–202 (PAG) each bind ATP. Residues Asp-50 and Glu-109 each contribute to the Mg(2+) site.

This sequence belongs to the dethiobiotin synthetase family. As to quaternary structure, homodimer. The cofactor is Mg(2+).

It is found in the cytoplasm. It carries out the reaction (7R,8S)-7,8-diammoniononanoate + CO2 + ATP = (4R,5S)-dethiobiotin + ADP + phosphate + 3 H(+). Its pathway is cofactor biosynthesis; biotin biosynthesis; biotin from 7,8-diaminononanoate: step 1/2. In terms of biological role, catalyzes a mechanistically unusual reaction, the ATP-dependent insertion of CO2 between the N7 and N8 nitrogen atoms of 7,8-diaminopelargonic acid (DAPA, also called 7,8-diammoniononanoate) to form a ureido ring. The chain is ATP-dependent dethiobiotin synthetase BioD from Parafrankia sp. (strain EAN1pec).